The chain runs to 393 residues: Formate-dependent phosphoribosylglycinamide formyltransferase (393 aa).

Residues 22–23 and Glu-82 each bind N(1)-(5-phospho-beta-D-ribosyl)glycinamide; that span reads EL. ATP-binding positions include Arg-114, Lys-155, 160–165, 195–198, and Glu-203; these read SSGHGQ and EGFI. In terms of domain architecture, ATP-grasp spans 119-308; that stretch reads RLAAEELGLP…QFALHARAIL (190 aa). Glu-267 and Glu-279 together coordinate Mg(2+). N(1)-(5-phospho-beta-D-ribosyl)glycinamide contacts are provided by residues Asp-286, Lys-356, and 363-364; that span reads RR.

This sequence belongs to the PurK/PurT family. Homodimer.

It catalyses the reaction N(1)-(5-phospho-beta-D-ribosyl)glycinamide + formate + ATP = N(2)-formyl-N(1)-(5-phospho-beta-D-ribosyl)glycinamide + ADP + phosphate + H(+). It functions in the pathway purine metabolism; IMP biosynthesis via de novo pathway; N(2)-formyl-N(1)-(5-phospho-D-ribosyl)glycinamide from N(1)-(5-phospho-D-ribosyl)glycinamide (formate route): step 1/1. Functionally, involved in the de novo purine biosynthesis. Catalyzes the transfer of formate to 5-phospho-ribosyl-glycinamide (GAR), producing 5-phospho-ribosyl-N-formylglycinamide (FGAR). Formate is provided by PurU via hydrolysis of 10-formyl-tetrahydrofolate. The polypeptide is Formate-dependent phosphoribosylglycinamide formyltransferase (Haemophilus ducreyi (strain 35000HP / ATCC 700724)).